Here is a 146-residue protein sequence, read N- to C-terminus: Ribonuclease H (146 aa).

The RNase H type-1 domain maps to 1 to 143; that stretch reads MQKKITIYTD…CDELARQAIQ (143 aa). Mg(2+) contacts are provided by D10, E48, D70, and D135.

Belongs to the RNase H family. Monomer. The cofactor is Mg(2+).

The protein resides in the cytoplasm. It catalyses the reaction Endonucleolytic cleavage to 5'-phosphomonoester.. Functionally, endonuclease that specifically degrades the RNA of RNA-DNA hybrids. The sequence is that of Ribonuclease H from Chlorobium luteolum (strain DSM 273 / BCRC 81028 / 2530) (Pelodictyon luteolum).